We begin with the raw amino-acid sequence, 1842 residues long: Plexin-B2 (1842 aa).

A signal peptide spans 1–19 (MALPLWALTFLGLTGLGLS). The region spanning 20 to 468 (LRSRKPESFR…TQDKVFRLPV (449 aa)) is the Sema domain. Over 20-1201 (LRSRKPESFR…EYDTRASDVP (1182 aa)) the chain is Extracellular. 2 disulfides stabilise this stretch: C78–C87 and C112–C120. Residues N127 and N242 are each glycosylated (N-linked (GlcNAc...) asparagine). Intrachain disulfides connect C250-C366, C266-C313, and C331-C353. N393 and N451 each carry an N-linked (GlcNAc...) asparagine glycan. 5 disulfides stabilise this stretch: C471-C488, C477-C520, C480-C497, C491-C503, and C557-C576. N798 is a glycosylation site (N-linked (GlcNAc...) asparagine). IPT/TIG domains lie at 806–895 (PVIT…QFTY), 898–982 (PQPL…SFTY), and 986–1095 (PMIR…VFEY). N919, N1053, and N1072 each carry an N-linked (GlcNAc...) asparagine glycan. A helical membrane pass occupies residues 1202 to 1222 (LSLILPLVMVPMVFIIVVSIY). The Cytoplasmic portion of the chain corresponds to 1223–1842 (CYWRKSQQAE…AALENKVTDL (620 aa)). Phosphoserine is present on residues S1240, S1248, and S1574.

The protein belongs to the plexin family. In terms of assembly, monomer, and heterodimer with PLXNB1. Interacts with MET, ARHGEF11 and ARHGEF12. May also interact with MST1R. In terms of tissue distribution, detected in macrophages from spleen and bone marrow (at protein level). Detected in granule cells in the developing cerebellum, dentate gyrus and olfactory bulb. Expressed in neurons and glia in the developing hippocampus.

Its subcellular location is the cell membrane. Cell surface receptor for SEMA4C, SEMA4D and SEMA4G that plays an important role in cell-cell signaling. Plays a role in glutamatergic synapse development and is required for SEMA4A-mediated excitatory synapse development. Binding to class 4 semaphorins promotes downstream activation of RHOA and phosphorylation of ERBB2 at 'Tyr-1248'. Also acts as a cell surface receptor for angiogenin (ANG); promoting ANG endocytosis and translocation to the cytoplasm or nucleus. Required for normal differentiation and migration of neuronal cells during brain corticogenesis and for normal embryonic brain development. Regulates the migration of cerebellar granule cells in the developing brain. Plays a role in RHOA activation and subsequent changes of the actin cytoskeleton. Plays a role in axon guidance, invasive growth and cell migration. May modulate the activity of RAC1 and CDC42. Down-regulates macrophage migration in wound-healing assays (in vitro). This is Plexin-B2 from Mus musculus (Mouse).